We begin with the raw amino-acid sequence, 488 residues long: GTPase Der (488 aa).

EngA-type G domains lie at 3–166 (PVVA…AEAM) and 199–372 (IKLA…DSAT). Residues 9–16 (GRPNVGKS), 56–60 (DTGGI), 118–121 (NKVD), 205–212 (GKPNVGKS), 252–256 (DTAGV), and 317–320 (NKWD) contribute to the GTP site. One can recognise a KH-like domain in the interval 373–457 (RRVSTSMLTR…PIQLRFQEGD (85 aa)). Residues 469-488 (MSQERRRKRALSHIKDRKTK) are disordered. Positions 473-488 (RRRKRALSHIKDRKTK) are enriched in basic residues.

The protein belongs to the TRAFAC class TrmE-Era-EngA-EngB-Septin-like GTPase superfamily. EngA (Der) GTPase family. Associates with the 50S ribosomal subunit.

Its function is as follows. GTPase that plays an essential role in the late steps of ribosome biogenesis. The chain is GTPase Der from Shewanella sp. (strain W3-18-1).